A 175-amino-acid chain; its full sequence is Adenine phosphoribosyltransferase (175 aa).

Belongs to the purine/pyrimidine phosphoribosyltransferase family. Homodimer.

The protein localises to the cytoplasm. The enzyme catalyses AMP + diphosphate = 5-phospho-alpha-D-ribose 1-diphosphate + adenine. It participates in purine metabolism; AMP biosynthesis via salvage pathway; AMP from adenine: step 1/1. Functionally, catalyzes a salvage reaction resulting in the formation of AMP, that is energically less costly than de novo synthesis. The polypeptide is Adenine phosphoribosyltransferase (Pelagibacter ubique (strain HTCC1062)).